Consider the following 125-residue polypeptide: Holo-[acyl-carrier-protein] synthase (125 aa).

Aspartate 8 and glutamate 57 together coordinate Mg(2+).

It belongs to the P-Pant transferase superfamily. AcpS family. It depends on Mg(2+) as a cofactor.

It localises to the cytoplasm. The enzyme catalyses apo-[ACP] + CoA = holo-[ACP] + adenosine 3',5'-bisphosphate + H(+). In terms of biological role, transfers the 4'-phosphopantetheine moiety from coenzyme A to a Ser of acyl-carrier-protein. In Azoarcus sp. (strain BH72), this protein is Holo-[acyl-carrier-protein] synthase.